Consider the following 468-residue polypeptide: uncharacterized protein (468 aa).

2 coiled-coil regions span residues Asn-10–Leu-94 and Phe-147–Ile-279. Residues Thr-324 to Asp-369 are disordered. Ser-342 carries the phosphoserine modification. Positions Val-399–Glu-445 form a coiled coil.

It is found in the cytoplasm. This is an uncharacterized protein from Schizosaccharomyces pombe (strain 972 / ATCC 24843) (Fission yeast).